A 201-amino-acid chain; its full sequence is Ras-related protein Rab-5A (201 aa).

GTP contacts are provided by residues 16–24 (GEAAVGKSS), 35–41 (LDYQEST), 64–68 (DTAGQ), 122–125 (NKLD), and 152–154 (SAK). The Effector region motif lies at 38–46 (QESTIGAAF). S-geranylgeranyl cysteine attachment occurs at residues Cys199 and Cys200.

Belongs to the small GTPase superfamily. Rab family.

It is found in the cell membrane. It localises to the endosome membrane. Its activity is regulated as follows. Regulated by guanine nucleotide exchange factors (GEFs) which promote the exchange of bound GDP for free GTP. Functionally, required for the fusion of plasma membranes and early endosomes. The sequence is that of Ras-related protein Rab-5A (rab5A) from Dictyostelium discoideum (Social amoeba).